Here is a 472-residue protein sequence, read N- to C-terminus: UDP-glucosyltransferase 103 (472 aa).

Catalysis depends on histidine 15, which acts as the Proton acceptor. Histidine 15 is an an anthocyanidin binding site. Aspartate 117 functions as the Charge relay in the catalytic mechanism. Positions 344, 346, 361, 364, 365, 366, and 369 each coordinate UDP-alpha-D-glucose. Position 384 (glycine 384) interacts with an anthocyanidin. 2 residues coordinate UDP-alpha-D-glucose: glutamate 385 and glutamine 386.

This sequence belongs to the UDP-glycosyltransferase family.

It carries out the reaction (20S)-ginsenoside F1 + UDP-alpha-D-glucose = (20S)-ginsenoside Rg1 + UDP + H(+). It participates in secondary metabolite biosynthesis; terpenoid biosynthesis. Functionally, probable component of the triterpene saponins (e.g. ginsenosides) biosynthetic pathway. No detectable activity toward protopanaxatriol (PPT). This chain is UDP-glucosyltransferase 103, found in Panax ginseng (Korean ginseng).